The sequence spans 38 residues: Large ribosomal subunit protein bL36 (38 aa).

Belongs to the bacterial ribosomal protein bL36 family.

The sequence is that of Large ribosomal subunit protein bL36 from Sorangium cellulosum (strain So ce56) (Polyangium cellulosum (strain So ce56)).